Consider the following 198-residue polypeptide: dTTP/UTP pyrophosphatase (198 aa).

Asp-75 (proton acceptor) is an active-site residue.

This sequence belongs to the Maf family. YhdE subfamily. A divalent metal cation serves as cofactor.

It is found in the cytoplasm. It catalyses the reaction dTTP + H2O = dTMP + diphosphate + H(+). The catalysed reaction is UTP + H2O = UMP + diphosphate + H(+). Its function is as follows. Nucleoside triphosphate pyrophosphatase that hydrolyzes dTTP and UTP. May have a dual role in cell division arrest and in preventing the incorporation of modified nucleotides into cellular nucleic acids. This Wolbachia sp. subsp. Drosophila simulans (strain wRi) protein is dTTP/UTP pyrophosphatase.